The following is a 96-amino-acid chain: Putative pterin-4-alpha-carbinolamine dehydratase (96 aa).

Belongs to the pterin-4-alpha-carbinolamine dehydratase family.

It catalyses the reaction (4aS,6R)-4a-hydroxy-L-erythro-5,6,7,8-tetrahydrobiopterin = (6R)-L-erythro-6,7-dihydrobiopterin + H2O. This is Putative pterin-4-alpha-carbinolamine dehydratase from Prochlorococcus marinus (strain SARG / CCMP1375 / SS120).